Here is a 99-residue protein sequence, read N- to C-terminus: Large ribosomal subunit protein eL30 (99 aa).

Belongs to the eukaryotic ribosomal protein eL30 family.

This chain is Large ribosomal subunit protein eL30, found in Methanosarcina acetivorans (strain ATCC 35395 / DSM 2834 / JCM 12185 / C2A).